Consider the following 933-residue polypeptide: MRALAVLSVTLVMACTEAFFPFISRGKELLWGKPEESRVSSVLEESKRLVDTAMYATMQRNLKKRGILSPAQLLSFSKLPEPTSGVIARAAEIMETSIQAMKRKVNLKTQQSQHPTDALSEDLLSIIANMSGCLPYMLPPKCPNTCLANKYRPITGACNNRDHPRWGASNTALARWLPPVYEDGFSQPRGWNPGFLYNGFPLPPVREVTRHVIQVSNEVVTDDDRYSDLLMAWGQYIDHDIAFTPQSTSKAAFGGGADCQMTCENQNPCFPIQLPEEARPAAGTACLPFYRSSAACGTGDQGALFGNLSTANPRQQMNGLTSFLDASTVYGSSPALERQLRNWTSAEGLLRVHARLRDSGRAYLPFVPPRAPAACAPEPGIPGETRGPCFLAGDGRASEVPSLTALHTLWLREHNRLAAALKALNAHWSADAVYQEARKVVGALHQIITLRDYIPRILGPEAFQQYVGPYEGYDSTANPTVSNVFSTAAFRFGHATIHPLVRRLDASFQEHPDLPGLWLHQAFFSPWTLLRGGGLDPLIRGLLARPAKLQVQDQLMNEELTERLFVLSNSSTLDLASINLQRGRDHGLPGYNEWREFCGLPRLETPADLSTAIASRSVADKILDLYKHPDNIDVWLGGLAENFLPRARTGPLFACLIGKQMKALRDGDWFWWENSHVFTDAQRRELEKHSLSRVICDNTGLTRVPMDAFQVGKFPEDFESCDSITGMNLEAWRETFPQDDKCGFPESVENGDFVHCEESGRRVLVYSCRHGYELQGREQLTCTQEGWDFQPPLCKDVNECADGAHPPCHASARCRNTKGGFQCLCADPYELGDDGRTCVDSGRLPRVTWISMSLAALLIGGFAGLTSTVICRWTRTGTKSTLPISETGGGTPELRCGKHQAVGTSPQRAAAQDSEQESAGMEGRDTHRLPRAL.

The signal sequence occupies residues 1-18; that stretch reads MRALAVLSVTLVMACTEA. The Extracellular segment spans residues 19 to 846; sequence FFPFISRGKE…TCVDSGRLPR (828 aa). N129 carries an N-linked (GlcNAc...) asparagine glycan. C142 and C158 are joined by a disulfide. D238 contributes to the heme b binding site. Residue H239 is the Proton acceptor of the active site. D240 serves as a coordination point for Ca(2+). 2 disulfides stabilise this stretch: C259/C269 and C263/C286. The N-linked (GlcNAc...) asparagine glycan is linked to N307. Positions 321, 323, 325, and 327 each coordinate Ca(2+). Residue N342 is glycosylated (N-linked (GlcNAc...) asparagine). 2 residues coordinate heme b: E399 and H494. N-linked (GlcNAc...) asparagine glycosylation is present at N569. Disulfide bonds link C598/C655 and C696/C721. The 56-residue stretch at 740–795 folds into the Sushi domain; sequence DKCGFPESVENGDFVHCEESGRRVLVYSCRHGYELQGREQLTCTQEGWDFQPPLCK. One can recognise an EGF-like; calcium-binding domain in the interval 796–839; the sequence is DVNECADGAHPPCHASARCRNTKGGFQCLCADPYELGDDGRTCV. 3 disulfide bridges follow: C800–C814, C808–C823, and C825–C838. A helical transmembrane segment spans residues 847–871; it reads VTWISMSLAALLIGGFAGLTSTVIC. Topologically, residues 872-933 are cytoplasmic; sequence RWTRTGTKST…RDTHRLPRAL (62 aa). The tract at residues 881 to 933 is disordered; the sequence is TLPISETGGGTPELRCGKHQAVGTSPQRAAAQDSEQESAGMEGRDTHRLPRAL. A compositionally biased stretch (basic and acidic residues) spans 922–933; the sequence is EGRDTHRLPRAL.

Belongs to the peroxidase family. XPO subfamily. In terms of assembly, interacts with DUOX1, DUOX2 and CYBA. The cofactor is Ca(2+). It depends on heme b as a cofactor. In terms of processing, glycosylated. Post-translationally, heme is covalently bound through a H(2)O(2)-dependent autocatalytic process. Heme insertion is important for the delivery of protein at the cell surface. Cleaved in its N-terminal part.

The protein localises to the membrane. It localises to the cell surface. The enzyme catalyses 2 iodide + H2O2 + 2 H(+) = diiodine + 2 H2O. The catalysed reaction is [thyroglobulin]-L-tyrosine + iodide + H2O2 + H(+) = [thyroglobulin]-3-iodo-L-tyrosine + 2 H2O. It carries out the reaction [thyroglobulin]-3-iodo-L-tyrosine + iodide + H2O2 + H(+) = [thyroglobulin]-3,5-diiodo-L-tyrosine + 2 H2O. It catalyses the reaction 2 [thyroglobulin]-3,5-diiodo-L-tyrosine + H2O2 = [thyroglobulin]-L-thyroxine + [thyroglobulin]-dehydroalanine + 2 H2O. The enzyme catalyses [thyroglobulin]-3-iodo-L-tyrosine + [thyroglobulin]-3,5-diiodo-L-tyrosine + H2O2 = [thyroglobulin]-3,3',5-triiodo-L-thyronine + [thyroglobulin]-dehydroalanine + 2 H2O. It functions in the pathway hormone biosynthesis; thyroid hormone biosynthesis. In terms of biological role, iodination and coupling of the hormonogenic tyrosines in thyroglobulin to yield the thyroid hormones T(3) and T(4). The protein is Thyroid peroxidase of Homo sapiens (Human).